A 227-amino-acid polypeptide reads, in one-letter code: RNA pyrophosphohydrolase (227 aa).

A Nudix hydrolase domain is found at 6–149; it reads GFRPNVGIIL…KRDVYQMALT (144 aa). A Nudix box motif is present at residues 38 to 59; it reads GGIKYGETPEQAMYRELHEEIG. The interval 165-227 is disordered; that stretch reads PYGTHGAHGA…PVSTTRSTDD (63 aa). Residues 192-201 show a composition bias toward low complexity; the sequence is AQAAQQADAD. Positions 217 to 227 are enriched in polar residues; sequence TPVSTTRSTDD.

Belongs to the Nudix hydrolase family. RppH subfamily. Requires a divalent metal cation as cofactor.

Accelerates the degradation of transcripts by removing pyrophosphate from the 5'-end of triphosphorylated RNA, leading to a more labile monophosphorylated state that can stimulate subsequent ribonuclease cleavage. The chain is RNA pyrophosphohydrolase from Cupriavidus taiwanensis (strain DSM 17343 / BCRC 17206 / CCUG 44338 / CIP 107171 / LMG 19424 / R1) (Ralstonia taiwanensis (strain LMG 19424)).